The primary structure comprises 399 residues: Beta sliding clamp (399 aa).

This sequence belongs to the beta sliding clamp family. Forms a ring-shaped head-to-tail homodimer around DNA which binds and tethers DNA polymerases and other proteins to the DNA. The DNA replisome complex has a single clamp-loading complex (3 tau and 1 each of delta, delta', psi and chi subunits) which binds 3 Pol III cores (1 core on the leading strand and 2 on the lagging strand) each with a beta sliding clamp dimer. Additional proteins in the replisome are other copies of gamma, psi and chi, Ssb, DNA helicase and RNA primase.

The protein resides in the cytoplasm. In terms of biological role, confers DNA tethering and processivity to DNA polymerases and other proteins. Acts as a clamp, forming a ring around DNA (a reaction catalyzed by the clamp-loading complex) which diffuses in an ATP-independent manner freely and bidirectionally along dsDNA. Initially characterized for its ability to contact the catalytic subunit of DNA polymerase III (Pol III), a complex, multichain enzyme responsible for most of the replicative synthesis in bacteria; Pol III exhibits 3'-5' exonuclease proofreading activity. The beta chain is required for initiation of replication as well as for processivity of DNA replication. In Mycolicibacterium paratuberculosis (strain ATCC BAA-968 / K-10) (Mycobacterium paratuberculosis), this protein is Beta sliding clamp (dnaN).